Here is a 264-residue protein sequence, read N- to C-terminus: Thymidylate synthase 2 (264 aa).

Arg21 lines the dUMP pocket. His51 contacts (6R)-5,10-methylene-5,6,7,8-tetrahydrofolate. 126 to 127 contacts dUMP; sequence RR. The Nucleophile role is filled by Cys146. DUMP is bound by residues 166–169, Asn177, and 207–209; these read RSAD and HIY. Residue Asp169 participates in (6R)-5,10-methylene-5,6,7,8-tetrahydrofolate binding. Ser263 contributes to the (6R)-5,10-methylene-5,6,7,8-tetrahydrofolate binding site.

It belongs to the thymidylate synthase family. Bacterial-type ThyA subfamily. Homodimer.

Its subcellular location is the cytoplasm. It catalyses the reaction dUMP + (6R)-5,10-methylene-5,6,7,8-tetrahydrofolate = 7,8-dihydrofolate + dTMP. It participates in pyrimidine metabolism; dTTP biosynthesis. Functionally, catalyzes the reductive methylation of 2'-deoxyuridine-5'-monophosphate (dUMP) to 2'-deoxythymidine-5'-monophosphate (dTMP) while utilizing 5,10-methylenetetrahydrofolate (mTHF) as the methyl donor and reductant in the reaction, yielding dihydrofolate (DHF) as a by-product. This enzymatic reaction provides an intracellular de novo source of dTMP, an essential precursor for DNA biosynthesis. In Bacillus amyloliquefaciens (Bacillus velezensis), this protein is Thymidylate synthase 2.